The following is a 160-amino-acid chain: Cyclic pyranopterin monophosphate synthase (160 aa).

Substrate contacts are provided by residues 75–77 (MCH) and 115–116 (ME). The active site involves Asp130.

This sequence belongs to the MoaC family. Homohexamer; trimer of dimers.

It catalyses the reaction (8S)-3',8-cyclo-7,8-dihydroguanosine 5'-triphosphate = cyclic pyranopterin phosphate + diphosphate. It functions in the pathway cofactor biosynthesis; molybdopterin biosynthesis. In terms of biological role, catalyzes the conversion of (8S)-3',8-cyclo-7,8-dihydroguanosine 5'-triphosphate to cyclic pyranopterin monophosphate (cPMP). The chain is Cyclic pyranopterin monophosphate synthase from Lysinibacillus sphaericus (strain C3-41).